We begin with the raw amino-acid sequence, 205 residues long: Holliday junction branch migration complex subunit RuvA (205 aa).

Residues methionine 1–arginine 64 form a domain I region. The interval serine 65–valine 143 is domain II. Residues alanine 144–glycine 152 are flexible linker. A domain III region spans residues alanine 153–arginine 205.

This sequence belongs to the RuvA family. In terms of assembly, homotetramer. Forms an RuvA(8)-RuvB(12)-Holliday junction (HJ) complex. HJ DNA is sandwiched between 2 RuvA tetramers; dsDNA enters through RuvA and exits via RuvB. An RuvB hexamer assembles on each DNA strand where it exits the tetramer. Each RuvB hexamer is contacted by two RuvA subunits (via domain III) on 2 adjacent RuvB subunits; this complex drives branch migration. In the full resolvosome a probable DNA-RuvA(4)-RuvB(12)-RuvC(2) complex forms which resolves the HJ.

Its subcellular location is the cytoplasm. Its function is as follows. The RuvA-RuvB-RuvC complex processes Holliday junction (HJ) DNA during genetic recombination and DNA repair, while the RuvA-RuvB complex plays an important role in the rescue of blocked DNA replication forks via replication fork reversal (RFR). RuvA specifically binds to HJ cruciform DNA, conferring on it an open structure. The RuvB hexamer acts as an ATP-dependent pump, pulling dsDNA into and through the RuvAB complex. HJ branch migration allows RuvC to scan DNA until it finds its consensus sequence, where it cleaves and resolves the cruciform DNA. In Methylobacterium radiotolerans (strain ATCC 27329 / DSM 1819 / JCM 2831 / NBRC 15690 / NCIMB 10815 / 0-1), this protein is Holliday junction branch migration complex subunit RuvA.